The sequence spans 139 residues: MRHARGYRRLNRTHEHRKALFANMAGSLIEHEQIKTTLPKAKELRPIIEKLVTLAKRGDLHARRQAAAQLKEDRHVERLFAILGPRYAERAGGYVRVLKAGFRYGDMAPMAIIEFVDRDPNAKGAADKARVLAEEALED.

Belongs to the bacterial ribosomal protein bL17 family. As to quaternary structure, part of the 50S ribosomal subunit. Contacts protein L32.

This Cereibacter sphaeroides (strain ATCC 17025 / ATH 2.4.3) (Rhodobacter sphaeroides) protein is Large ribosomal subunit protein bL17.